The sequence spans 253 residues: Amino-acid-binding protein AabA (253 aa).

An N-terminal signal peptide occupies residues 1 to 23 (MPFLKTLFRGALCSIACGASLFC).

It belongs to the bacterial solute-binding protein 3 family.

It is found in the periplasm. The protein is Amino-acid-binding protein AabA (aabA) of Dichelobacter nodosus (Bacteroides nodosus).